A 104-amino-acid chain; its full sequence is uncharacterized protein (104 aa).

The segment at 62-92 (SSPAASSHPRKRGKEKKERTPTERLAAPARK) is disordered.

This is an uncharacterized protein from Human adenovirus B serotype 7 (HAdV-7).